The sequence spans 116 residues: Endoribonuclease EndoA (116 aa).

It belongs to the PemK/MazF family. In terms of assembly, homodimer. Forms a complex with antitoxin EndoAI in which the toxin activity is inhibited. One dimer binds a ssRNA substrate, forms a heterohexamer composed of alternating toxin and antitoxin homodimers which inhibits the endoribonuclease activity. Antitoxin prevents RNA binding to the endoribonuclease.

In terms of biological role, toxic component of a type II toxin-antitoxin (TA) system. Specific for 5'-UACAU-3' sequences, cleaving after the first U. Yields cleavage products with 3' phosphate and 5' hydroxyl groups. Cannot digest substrate with a UUdUACAUAA cleavage site. Overexpression is toxic for cell growth (shown in E.coli), probably by inhibiting protein synthesis through the cleavage of single-stranded RNA. The toxicity is reversed by the antitoxin EndoAI. Toxin activity cannot be inhibited by MazE from E.coli. The EndoA-EndoAI complex does not seem to bind its own promoter. This Bacillus subtilis (strain 168) protein is Endoribonuclease EndoA.